A 333-amino-acid polypeptide reads, in one-letter code: MNIGQRYGWEFALAALLIIEILLFGIANPRMLDINILLLSTSDFICIGIVALPLTMVIVSGGIDISFGSTIGLCAISLGVMNQTGIPMAAAIPLTLLVGAICGIINAALILYTGINPLVITLGTLYLFGGSALLLSGISGATGYEGIGGFPPALTDFANLTLFGLPMPLMLFLLCVLICWLFMHRTHSGRNIFLIGQSSKVARYAAIPVARTLYLLYSLTGIASAIAAIVLVSYFGSARSDLGASFLMPAITAVVLGGANIYGGSGSIIGTALAILLIGYLQQGLQMAGVPSQVSSALAGALLIIAVVGRSISLHHHQIRDWIQRWRNQRLSS.

10 helical membrane-spanning segments follow: residues 7–27 (YGWE…FGIA), 45–65 (ICIG…GIDI), 70–90 (TIGL…PMAA), 91–111 (AIPL…ALIL), 118–138 (LVIT…LSGI), 162–182 (LFGL…CWLF), 212–232 (TLYL…IVLV), 240–260 (SDLG…GGAN), 261–281 (IYGG…IGYL), and 288–308 (AGVP…IAVV).

This sequence belongs to the binding-protein-dependent transport system permease family. AraH/RbsC subfamily. The complex is composed of two ATP-binding proteins (LsrA), two transmembrane proteins (LsrC and LsrD) and a solute-binding protein (LsrB).

Its subcellular location is the cell inner membrane. In terms of biological role, part of the ABC transporter complex LsrABCD involved in autoinducer 2 (AI-2) import. Probably responsible for the translocation of the substrate across the membrane. The protein is Autoinducer 2 import system permease protein LsrD (lsrD) of Photorhabdus laumondii subsp. laumondii (strain DSM 15139 / CIP 105565 / TT01) (Photorhabdus luminescens subsp. laumondii).